Here is a 172-residue protein sequence, read N- to C-terminus: RNA pyrophosphohydrolase (172 aa).

The region spanning 6–149 is the Nudix hydrolase domain; that stretch reads GYRLNVGIVI…KRDVYRRAMK (144 aa). The short motif at 38 to 59 is the Nudix box element; that stretch reads GGIDEGETPEQAMYRELYEEVG.

Belongs to the Nudix hydrolase family. RppH subfamily. It depends on a divalent metal cation as a cofactor.

Functionally, accelerates the degradation of transcripts by removing pyrophosphate from the 5'-end of triphosphorylated RNA, leading to a more labile monophosphorylated state that can stimulate subsequent ribonuclease cleavage. This Vibrio atlanticus (strain LGP32) (Vibrio splendidus (strain Mel32)) protein is RNA pyrophosphohydrolase.